The primary structure comprises 309 residues: Taste receptor type 2 member 46 (309 aa).

Residue M1 is a topological domain, extracellular. The helical transmembrane segment at 2–22 threads the bilayer; it reads ITFLPIIFSILIVVTFVIGNF. At 23–46 the chain is on the cytoplasmic side; it reads ANGFIALANSIEWFKRQKISFADQ. Residues 47–67 form a helical membrane-spanning segment; sequence ILTALAVSRVGLLWVLLLNWY. Topologically, residues 68–86 are extracellular; the sequence is ATELNPAFYSIEVRITAYN. The helical transmembrane segment at 87 to 107 threads the bilayer; that stretch reads LWAVINHFSNWLATSLSIFYL. The Cytoplasmic portion of the chain corresponds to 108–126; sequence LKIANFSNLIFLRLKRRVK. The chain crosses the membrane as a helical span at residues 127-147; that stretch reads SVVLVILLGPLLFLVCHLFVI. The Extracellular portion of the chain corresponds to 148–178; that stretch reads NMNQIIWTKEYEGNMTWKIKLRSAMYLSNIT. N161 and N176 each carry an N-linked (GlcNAc...) asparagine glycan. The chain crosses the membrane as a helical span at residues 179 to 199; that stretch reads VTILANLVPFTLTLISFLLLI. Topologically, residues 200–229 are cytoplasmic; that stretch reads CSLCKHLKKMQLHGKGSQDPSMKVHIKALQ. A helical membrane pass occupies residues 230-250; sequence TVTSFLLLCAIYFLSIIMSVW. Topologically, residues 251 to 259 are extracellular; that stretch reads SFESLENKP. A helical membrane pass occupies residues 260–280; sequence VFMFCEAITFSYPSTHPFILI. Residues 281–309 lie on the Cytoplasmic side of the membrane; sequence WGNKKLKQTFLSVLWHVRYWVKGEEPSSP.

Belongs to the G-protein coupled receptor T2R family.

The protein resides in the membrane. It is found in the cell projection. It localises to the cilium membrane. In terms of biological role, receptor that may play a role in the perception of bitterness and is gustducin-linked. May play a role in sensing the chemical composition of the gastrointestinal content. The activity of this receptor may stimulate alpha gustducin, mediate PLC-beta-2 activation and lead to the gating of TRPM5. In airway epithelial cells, binding of bitter compounds increases the intracellular calcium ion concentration and stimulates ciliary beat frequency. The polypeptide is Taste receptor type 2 member 46 (TAS2R46) (Pan paniscus (Pygmy chimpanzee)).